Reading from the N-terminus, the 125-residue chain is Holo-[acyl-carrier-protein] synthase (125 aa).

Mg(2+)-binding residues include Asp-8 and Glu-57.

It belongs to the P-Pant transferase superfamily. AcpS family. Mg(2+) is required as a cofactor.

It is found in the cytoplasm. The catalysed reaction is apo-[ACP] + CoA = holo-[ACP] + adenosine 3',5'-bisphosphate + H(+). Its function is as follows. Transfers the 4'-phosphopantetheine moiety from coenzyme A to a Ser of acyl-carrier-protein. The sequence is that of Holo-[acyl-carrier-protein] synthase from Geobacter sp. (strain M21).